The primary structure comprises 359 residues: DNA polymerase IV (359 aa).

In terms of domain architecture, UmuC spans Ile4–Gly185. The Mg(2+) site is built by Asp8 and Asp103. Residue Glu104 is part of the active site.

The protein belongs to the DNA polymerase type-Y family. In terms of assembly, monomer. It depends on Mg(2+) as a cofactor.

Its subcellular location is the cytoplasm. The enzyme catalyses DNA(n) + a 2'-deoxyribonucleoside 5'-triphosphate = DNA(n+1) + diphosphate. Functionally, poorly processive, error-prone DNA polymerase involved in untargeted mutagenesis. Copies undamaged DNA at stalled replication forks, which arise in vivo from mismatched or misaligned primer ends. These misaligned primers can be extended by PolIV. Exhibits no 3'-5' exonuclease (proofreading) activity. May be involved in translesional synthesis, in conjunction with the beta clamp from PolIII. This Shewanella sp. (strain ANA-3) protein is DNA polymerase IV.